A 122-amino-acid chain; its full sequence is Ribosome-binding factor A (122 aa).

The protein belongs to the RbfA family. In terms of assembly, monomer. Binds 30S ribosomal subunits, but not 50S ribosomal subunits or 70S ribosomes.

The protein localises to the cytoplasm. In terms of biological role, one of several proteins that assist in the late maturation steps of the functional core of the 30S ribosomal subunit. Associates with free 30S ribosomal subunits (but not with 30S subunits that are part of 70S ribosomes or polysomes). Required for efficient processing of 16S rRNA. May interact with the 5'-terminal helix region of 16S rRNA. The protein is Ribosome-binding factor A of Halothermothrix orenii (strain H 168 / OCM 544 / DSM 9562).